We begin with the raw amino-acid sequence, 426 residues long: Enolase (426 aa).

Glutamine 163 serves as a coordination point for (2R)-2-phosphoglycerate. Glutamate 205 (proton donor) is an active-site residue. Mg(2+) contacts are provided by aspartate 242, glutamate 286, and aspartate 313. The (2R)-2-phosphoglycerate site is built by lysine 338, arginine 367, serine 368, and lysine 389. Lysine 338 (proton acceptor) is an active-site residue.

Belongs to the enolase family. Requires Mg(2+) as cofactor.

It localises to the cytoplasm. Its subcellular location is the secreted. The protein localises to the cell surface. The enzyme catalyses (2R)-2-phosphoglycerate = phosphoenolpyruvate + H2O. It participates in carbohydrate degradation; glycolysis; pyruvate from D-glyceraldehyde 3-phosphate: step 4/5. In terms of biological role, catalyzes the reversible conversion of 2-phosphoglycerate (2-PG) into phosphoenolpyruvate (PEP). It is essential for the degradation of carbohydrates via glycolysis. This Helicobacter pylori (strain G27) protein is Enolase.